The sequence spans 280 residues: Bifunctional protein FolD (280 aa).

Residues glycine 164–serine 166, serine 189, and valine 230 each bind NADP(+).

This sequence belongs to the tetrahydrofolate dehydrogenase/cyclohydrolase family. Homodimer.

The catalysed reaction is (6R)-5,10-methylene-5,6,7,8-tetrahydrofolate + NADP(+) = (6R)-5,10-methenyltetrahydrofolate + NADPH. It catalyses the reaction (6R)-5,10-methenyltetrahydrofolate + H2O = (6R)-10-formyltetrahydrofolate + H(+). Its pathway is one-carbon metabolism; tetrahydrofolate interconversion. Its function is as follows. Catalyzes the oxidation of 5,10-methylenetetrahydrofolate to 5,10-methenyltetrahydrofolate and then the hydrolysis of 5,10-methenyltetrahydrofolate to 10-formyltetrahydrofolate. The polypeptide is Bifunctional protein FolD (Geotalea daltonii (strain DSM 22248 / JCM 15807 / FRC-32) (Geobacter daltonii)).